The primary structure comprises 166 residues: Ribosome maturation factor RimM (166 aa).

The PRC barrel domain occupies 95 to 164; sequence EEEYYAYELV…KKIIVKEELL (70 aa).

Belongs to the RimM family. As to quaternary structure, binds ribosomal protein uS19.

It localises to the cytoplasm. Its function is as follows. An accessory protein needed during the final step in the assembly of 30S ribosomal subunit, possibly for assembly of the head region. Essential for efficient processing of 16S rRNA. May be needed both before and after RbfA during the maturation of 16S rRNA. It has affinity for free ribosomal 30S subunits but not for 70S ribosomes. In Aquifex aeolicus (strain VF5), this protein is Ribosome maturation factor RimM.